The following is a 322-amino-acid chain: Transaldolase (322 aa).

The active-site Schiff-base intermediate with substrate is the lysine 136.

Belongs to the transaldolase family. Type 1 subfamily. Homodimer.

The protein resides in the cytoplasm. The enzyme catalyses D-sedoheptulose 7-phosphate + D-glyceraldehyde 3-phosphate = D-erythrose 4-phosphate + beta-D-fructose 6-phosphate. It participates in carbohydrate degradation; pentose phosphate pathway; D-glyceraldehyde 3-phosphate and beta-D-fructose 6-phosphate from D-ribose 5-phosphate and D-xylulose 5-phosphate (non-oxidative stage): step 2/3. In terms of biological role, transaldolase is important for the balance of metabolites in the pentose-phosphate pathway. The protein is Transaldolase of Xanthomonas oryzae pv. oryzae (strain PXO99A).